We begin with the raw amino-acid sequence, 224 residues long: Urease accessory protein UreF (224 aa).

The protein belongs to the UreF family. In terms of assembly, ureD, UreF and UreG form a complex that acts as a GTP-hydrolysis-dependent molecular chaperone, activating the urease apoprotein by helping to assemble the nickel containing metallocenter of UreC. The UreE protein probably delivers the nickel.

Its subcellular location is the cytoplasm. Its function is as follows. Required for maturation of urease via the functional incorporation of the urease nickel metallocenter. The chain is Urease accessory protein UreF from Citrobacter koseri (strain ATCC BAA-895 / CDC 4225-83 / SGSC4696).